We begin with the raw amino-acid sequence, 147 residues long: Hemoglobin subunit epsilon-4 (147 aa).

A Globin domain is found at 3-147 (HFTTEEKAAV…VANALAHKYH (145 aa)). Heme b-binding residues include His-64 and His-93.

This sequence belongs to the globin family. Red blood cells.

Its function is as follows. Hemoglobin epsilon chain is a beta-type chain found in early embryos. The polypeptide is Hemoglobin subunit epsilon-4 (HBE4) (Bos taurus (Bovine)).